We begin with the raw amino-acid sequence, 517 residues long: Protein disulfide-isomerase EUG1 (517 aa).

Positions 1–29 (MQVTTRFISAIVSFCLFASFTLAENSARA) are cleaved as a signal peptide. The region spanning 30–141 (TPGSDLLVLT…ITQYMIQLYE (112 aa)) is the Thioredoxin 1 domain. N-linked (GlcNAc...) asparagine glycosylation is found at asparagine 159, asparagine 174, asparagine 207, asparagine 293, and asparagine 462. The region spanning 355–487 (YREGTAKPIV…VFEFIKESGT (133 aa)) is the Thioredoxin 2 domain. A Prevents secretion from ER motif is present at residues 514–517 (HDEL).

Belongs to the protein disulfide isomerase family. In terms of assembly, interacts with EPS1. May have O-linked mannose residues.

It is found in the endoplasmic reticulum lumen. It catalyses the reaction Catalyzes the rearrangement of -S-S- bonds in proteins.. In terms of biological role, probably interacts with nascent polypeptides in the endoplasmic reticulum. It is an essential gene only in the absence of PDI. Its native disulfide isomerase activity is very low. The protein is Protein disulfide-isomerase EUG1 (EUG1) of Saccharomyces cerevisiae (strain ATCC 204508 / S288c) (Baker's yeast).